A 226-amino-acid chain; its full sequence is Ribose-5-phosphate isomerase A (226 aa).

Substrate contacts are provided by residues 25 to 28 (TGST), 81 to 84 (DGAD), and 94 to 97 (KGGG). The active-site Proton acceptor is the glutamate 103. Lysine 121 provides a ligand contact to substrate.

The protein belongs to the ribose 5-phosphate isomerase family. In terms of assembly, homodimer.

It catalyses the reaction aldehydo-D-ribose 5-phosphate = D-ribulose 5-phosphate. The protein operates within carbohydrate degradation; pentose phosphate pathway; D-ribose 5-phosphate from D-ribulose 5-phosphate (non-oxidative stage): step 1/1. Its function is as follows. Catalyzes the reversible conversion of ribose-5-phosphate to ribulose 5-phosphate. In Enterococcus faecalis (strain ATCC 700802 / V583), this protein is Ribose-5-phosphate isomerase A.